Here is a 652-residue protein sequence, read N- to C-terminus: Threonine--tRNA ligase (652 aa).

The TGS domain maps to 1–63 (MAEISLTFPD…TESGDFQLIT (63 aa)). Residues 246–545 (DHRVIGRDLD…LIEMYKGAFP (300 aa)) form a catalytic region. Cysteine 340, histidine 391, and histidine 522 together coordinate Zn(2+).

Belongs to the class-II aminoacyl-tRNA synthetase family. Homodimer. The cofactor is Zn(2+).

The protein resides in the cytoplasm. It carries out the reaction tRNA(Thr) + L-threonine + ATP = L-threonyl-tRNA(Thr) + AMP + diphosphate + H(+). In terms of biological role, catalyzes the attachment of threonine to tRNA(Thr) in a two-step reaction: L-threonine is first activated by ATP to form Thr-AMP and then transferred to the acceptor end of tRNA(Thr). Also edits incorrectly charged L-seryl-tRNA(Thr). This is Threonine--tRNA ligase from Leuconostoc mesenteroides subsp. mesenteroides (strain ATCC 8293 / DSM 20343 / BCRC 11652 / CCM 1803 / JCM 6124 / NCDO 523 / NBRC 100496 / NCIMB 8023 / NCTC 12954 / NRRL B-1118 / 37Y).